The chain runs to 440 residues: Glycerol-3-phosphate dehydrogenase [NAD(+)], chloroplastic (440 aa).

The transit peptide at 1-47 (MAAAAAATFLPHTPTPRRRLAVAVHSPTRRRLSLVFSGPPDGALSVA) directs the protein to the chloroplast. A disordered region spans residues 57–76 (EEAAAAVSAPRGGGGGGGKE). Residues 114-119 (GGGSFG), F191, K214, and A248 contribute to the NAD(+) site. K214 serves as a coordination point for substrate. K299 (proton acceptor) is an active-site residue. R363 and E389 together coordinate NAD(+). 363-364 (RN) provides a ligand contact to substrate.

Belongs to the NAD-dependent glycerol-3-phosphate dehydrogenase family.

Its subcellular location is the plastid. The protein localises to the chloroplast. The catalysed reaction is sn-glycerol 3-phosphate + NAD(+) = dihydroxyacetone phosphate + NADH + H(+). Its pathway is membrane lipid metabolism; glycerophospholipid metabolism. Required to supply glycerol-3-phosphate in the chloroplast for the synthesis of glycerolipids. The sequence is that of Glycerol-3-phosphate dehydrogenase [NAD(+)], chloroplastic from Oryza sativa subsp. japonica (Rice).